We begin with the raw amino-acid sequence, 670 residues long: G-protein coupled receptor moody (670 aa).

Topologically, residues 1 to 40 are extracellular; the sequence is MSDETTISLEDGYPPLEALTTMVPPADATGFSQSLLTFAA. A helical membrane pass occupies residues 41 to 61; that stretch reads VMTFLIMIVGICGNLLTVVAL. Over 62-69 the chain is Cytoplasmic; that stretch reads LKCPKVRN. The chain crosses the membrane as a helical span at residues 70-90; it reads VAAAFIISLCIADLLFCALVL. Over 91 to 111 the chain is Extracellular; sequence PFQGLRFVQGTWRHGQVLCRL. Cys-109 and Cys-188 are oxidised to a cystine. Residues 112–132 form a helical membrane-spanning segment; that stretch reads IPFIQYGNIGVSLLCIAMITI. Topologically, residues 133-152 are cytoplasmic; it reads NRYVMITHHGLYARIYKRHW. Residues 153–173 form a helical membrane-spanning segment; sequence IAVMIAACWLFSYGMQLPTLL. Over 174 to 202 the chain is Extracellular; it reads GEWGRFGYDSRLQTCSIMTDDHGHSSKTT. The chain crosses the membrane as a helical span at residues 203 to 223; that stretch reads LFITAFVIPCLVIIACYAKIF. Over 224-313 the chain is Cytoplasmic; it reads WVVHKSEQRL…AKRNEWRITK (90 aa). A disordered region spans residues 258–302; sequence LPSGAECQPSNRVSSDSSSSFSIDVPETAPSGKQQPTRVKDQREV. The segment covering 267–279 has biased composition (low complexity); the sequence is SNRVSSDSSSSFS. Residues 314-334 form a helical membrane-spanning segment; it reads MVLAIFLSFVVCYLPITIVKV. At 335 to 345 the chain is on the extracellular side; that stretch reads ADKNVEHPSLH. Residues 346–366 traverse the membrane as a helical segment; that stretch reads ICSYILLYLSACINPIIYVIM. At 367-670 the chain is on the cytoplasmic side; that stretch reads NKQYRKAYKT…LTAKMKFPKD (304 aa). Disordered regions lie at residues 461 to 490, 562 to 622, and 636 to 670; these read DLIS…GSNS, ELPP…YMNV, and TNAV…FPKD. The span at 564-584 shows a compositional bias: pro residues; sequence PPTPPATSAPTTPAPPPPSSP. The span at 585–598 shows a compositional bias: low complexity; that stretch reads LHPLSTDSSTTTIS. The segment covering 646–660 has biased composition (polar residues); it reads GPANTSATVSISGSK.

The protein belongs to the G-protein coupled receptor 1 family. Isoform A and isoform B are expressed in the head. Isoform B only is expressed in the body. Expressed in embryonic glial cells that are involved in ensheathment and insulation of the nervous system. Both isoforms are expressed in glia that insulate the larval and adult nervous system. Also expressed in the germ cells, the gut, and the heart.

It is found in the cell membrane. In terms of biological role, isoform A and isoform B are required in glia to regulate the acute sensitivity to cocaine and to continuously maintain the proper blood-brain barrier (BBB) function. A moody-mediated signaling pathway functions in glia to regulate nervous system insulation and drug-related behaviors. Galphai and Galphao, and the regulator of G protein signaling, loco, are required in the surface glia to achieve effective insulation. The components function by regulating the cortical actin and thereby stabilizing the extended morphology of the surface glia, which in turn is necessary for the formation of septate junctions of sufficient length to achieve proper sealing of the nerve cord. This Drosophila melanogaster (Fruit fly) protein is G-protein coupled receptor moody.